Consider the following 815-residue polypeptide: Echinoderm microtubule-associated protein-like 1 (815 aa).

The stretch at 31-72 (SMEVTDRIASLEQRVQMQEDDIQLLKSALADVVRRLNITEEQ) forms a coiled coil. Residues 77-179 (NRKGPTKARP…NSESKPKEPV (103 aa)) form a disordered region. The span at 92 to 101 (PLRTTVNNGT) shows a compositional bias: polar residues. Serine 113 bears the Phosphoserine mark. Over residues 126 to 138 (TKSNIKRTSSSER) the composition is skewed to polar residues. A compositionally biased stretch (basic and acidic residues) spans 143–153 (GRRESNGDSRG). The segment covering 156 to 168 (NRTGSTSSSSSGK) has biased composition (low complexity). The tandem atypical propeller in EMLs stretch occupies residues 176 to 815 (KEPVFSAEEG…DTSIMQWRVI (640 aa)). 12 WD repeats span residues 261–310 (EQLQ…IWDS), 315–358 (TLHV…VWDW), 363–400 (KLAD…FWTL), 409–446 (QGLF…VWGK), 450–489 (RISY…SWSG), 493–530 (KLRK…LQGT), 535–572 (FTPI…LWDA), 578–613 (VWDK…VFDT), 617–655 (DLVT…IYGV), 664–701 (RVGK…YWVP), 709–768 (SVET…LFSY), and 775–814 (APSH…QWRV).

The protein belongs to the WD repeat EMAP family. As to quaternary structure, homotrimer; self-association is mediated by the N-terminal coiled coil. Does not interact with EML3. Binds repolymerizing microtubules. Binds unpolymerized tubulins via its WD repeat region. Interacts with TASOR. In terms of tissue distribution, ubiquitous; expressed in most tissues with the exception of thymus and peripheral blood lymphocytes.

It is found in the cytoplasm. The protein resides in the perinuclear region. It localises to the cytoskeleton. Functionally, modulates the assembly and organization of the microtubule cytoskeleton, and probably plays a role in regulating the orientation of the mitotic spindle and the orientation of the plane of cell division. Required for normal proliferation of neuronal progenitor cells in the developing brain and for normal brain development. Does not affect neuron migration per se. This is Echinoderm microtubule-associated protein-like 1 (EML1) from Homo sapiens (Human).